We begin with the raw amino-acid sequence, 394 residues long: Exodeoxyribonuclease 7 large subunit (394 aa).

Belongs to the XseA family. As to quaternary structure, heterooligomer composed of large and small subunits.

Its subcellular location is the cytoplasm. It catalyses the reaction Exonucleolytic cleavage in either 5'- to 3'- or 3'- to 5'-direction to yield nucleoside 5'-phosphates.. Functionally, bidirectionally degrades single-stranded DNA into large acid-insoluble oligonucleotides, which are then degraded further into small acid-soluble oligonucleotides. This is Exodeoxyribonuclease 7 large subunit from Thermotoga sp. (strain RQ2).